The following is a 139-amino-acid chain: D-ribose pyranase (139 aa).

His-20 serves as the catalytic Proton donor. Substrate-binding positions include Asp-28, His-106, and 128-130; that span reads YAN.

The protein belongs to the RbsD / FucU family. RbsD subfamily. Homodecamer.

It is found in the cytoplasm. The enzyme catalyses beta-D-ribopyranose = beta-D-ribofuranose. Its pathway is carbohydrate metabolism; D-ribose degradation; D-ribose 5-phosphate from beta-D-ribopyranose: step 1/2. Its function is as follows. Catalyzes the interconversion of beta-pyran and beta-furan forms of D-ribose. This is D-ribose pyranase from Escherichia coli O139:H28 (strain E24377A / ETEC).